The following is a 236-amino-acid chain: Small ribosomal subunit protein uS2c (236 aa).

The protein belongs to the universal ribosomal protein uS2 family.

The protein resides in the plastid. The protein localises to the chloroplast. The protein is Small ribosomal subunit protein uS2c (rps2) of Agrostis stolonifera (Creeping bentgrass).